We begin with the raw amino-acid sequence, 300 residues long: Estradiol 17-beta-dehydrogenase 11 (300 aa).

The first 18 residues, 1-18 (MKILLDLLLLLPLLIVCC), serve as a signal peptide directing secretion. Residue 40-67 (LITGAGHGIGRLTAYEFAKLKSKLVLWD) coordinates NADP(+). Position 172 (Ser172) interacts with substrate. Tyr185 serves as the catalytic Proton acceptor. Lys189 lines the NADP(+) pocket.

The protein belongs to the short-chain dehydrogenases/reductases (SDR) family. 17-beta-HSD 3 subfamily.

It is found in the endoplasmic reticulum. The protein localises to the lipid droplet. It catalyses the reaction 17beta-estradiol + NAD(+) = estrone + NADH + H(+). It carries out the reaction 17beta-estradiol + NADP(+) = estrone + NADPH + H(+). Its function is as follows. Can convert androstan-3-alpha,17-beta-diol (3-alpha-diol) to androsterone in vitro, suggesting that it may participate in androgen metabolism during steroidogenesis. May act by metabolizing compounds that stimulate steroid synthesis and/or by generating metabolites that inhibit it. Has no activity toward DHEA (dehydroepiandrosterone), or A-dione (4-androste-3,17-dione), and only a slight activity toward testosterone to A-dione. This chain is Estradiol 17-beta-dehydrogenase 11 (HSD17B11), found in Macaca fascicularis (Crab-eating macaque).